We begin with the raw amino-acid sequence, 232 residues long: V-type ATP synthase subunit E (232 aa).

It belongs to the V-ATPase E subunit family.

Functionally, produces ATP from ADP in the presence of a proton gradient across the membrane. The protein is V-type ATP synthase subunit E (atpE) of Treponema pallidum (strain Nichols).